The following is a 110-amino-acid chain: Nucleoid-associated protein ESA_02800 (110 aa).

Residues 89–110 (QKEKMASVSSGMQLPPGFKMPF) are disordered.

This sequence belongs to the YbaB/EbfC family. In terms of assembly, homodimer.

The protein localises to the cytoplasm. Its subcellular location is the nucleoid. In terms of biological role, binds to DNA and alters its conformation. May be involved in regulation of gene expression, nucleoid organization and DNA protection. The protein is Nucleoid-associated protein ESA_02800 of Cronobacter sakazakii (strain ATCC BAA-894) (Enterobacter sakazakii).